Reading from the N-terminus, the 199-residue chain is Elongation factor Ts, chloroplastic (199 aa).

This sequence belongs to the EF-Ts family.

It localises to the plastid. It is found in the chloroplast. Associates with the EF-Tu.GDP complex and induces the exchange of GDP to GTP. It remains bound to the aminoacyl-tRNA.EF-Tu.GTP complex up to the GTP hydrolysis stage on the ribosome. The chain is Elongation factor Ts, chloroplastic (tsf) from Galdieria sulphuraria (Red alga).